The sequence spans 605 residues: Threonine--tRNA ligase (605 aa).

Residues 195–497 form a catalytic region; the sequence is DHRKVGKELG…LIEEYAGDFP (303 aa). Zn(2+) contacts are provided by cysteine 294, histidine 345, and histidine 474.

It belongs to the class-II aminoacyl-tRNA synthetase family. Homodimer. It depends on Zn(2+) as a cofactor.

It is found in the cytoplasm. It catalyses the reaction tRNA(Thr) + L-threonine + ATP = L-threonyl-tRNA(Thr) + AMP + diphosphate + H(+). Catalyzes the attachment of threonine to tRNA(Thr) in a two-step reaction: L-threonine is first activated by ATP to form Thr-AMP and then transferred to the acceptor end of tRNA(Thr). Also edits incorrectly charged L-seryl-tRNA(Thr). The polypeptide is Threonine--tRNA ligase (Thermosynechococcus vestitus (strain NIES-2133 / IAM M-273 / BP-1)).